We begin with the raw amino-acid sequence, 36 residues long: Photosystem I reaction center subunit VIII (36 aa).

A helical membrane pass occupies residues 9-29 (ILVPLVGLVFPAVTMASLFLY).

The protein belongs to the PsaI family.

The protein resides in the plastid. Its subcellular location is the chloroplast thylakoid membrane. In terms of biological role, may help in the organization of the PsaL subunit. The chain is Photosystem I reaction center subunit VIII from Staurastrum punctulatum (Green alga).